A 248-amino-acid polypeptide reads, in one-letter code: Ubiquinone/menaquinone biosynthesis C-methyltransferase UbiE (248 aa).

S-adenosyl-L-methionine contacts are provided by Ser-68 and Asp-92.

The protein belongs to the class I-like SAM-binding methyltransferase superfamily. MenG/UbiE family.

It catalyses the reaction a 2-demethylmenaquinol + S-adenosyl-L-methionine = a menaquinol + S-adenosyl-L-homocysteine + H(+). The catalysed reaction is a 2-methoxy-6-(all-trans-polyprenyl)benzene-1,4-diol + S-adenosyl-L-methionine = a 5-methoxy-2-methyl-3-(all-trans-polyprenyl)benzene-1,4-diol + S-adenosyl-L-homocysteine + H(+). It functions in the pathway quinol/quinone metabolism; menaquinone biosynthesis; menaquinol from 1,4-dihydroxy-2-naphthoate: step 2/2. It participates in cofactor biosynthesis; ubiquinone biosynthesis. Functionally, methyltransferase required for the conversion of demethylmenaquinol (DMKH2) to menaquinol (MKH2) and the conversion of 2-polyprenyl-6-methoxy-1,4-benzoquinol (DDMQH2) to 2-polyprenyl-3-methyl-6-methoxy-1,4-benzoquinol (DMQH2). The chain is Ubiquinone/menaquinone biosynthesis C-methyltransferase UbiE from Rickettsia rickettsii (strain Iowa).